A 189-amino-acid polypeptide reads, in one-letter code: Pyridoxal 5'-phosphate synthase subunit PdxT (189 aa).

52–54 is a binding site for L-glutamine; sequence GES. Cys81 serves as the catalytic Nucleophile. L-glutamine contacts are provided by residues Arg108 and 136-137; that span reads IR. Catalysis depends on charge relay system residues His172 and Glu174.

The protein belongs to the glutaminase PdxT/SNO family. As to quaternary structure, in the presence of PdxS, forms a dodecamer of heterodimers. Only shows activity in the heterodimer.

It carries out the reaction aldehydo-D-ribose 5-phosphate + D-glyceraldehyde 3-phosphate + L-glutamine = pyridoxal 5'-phosphate + L-glutamate + phosphate + 3 H2O + H(+). The enzyme catalyses L-glutamine + H2O = L-glutamate + NH4(+). It participates in cofactor biosynthesis; pyridoxal 5'-phosphate biosynthesis. In terms of biological role, catalyzes the hydrolysis of glutamine to glutamate and ammonia as part of the biosynthesis of pyridoxal 5'-phosphate. The resulting ammonia molecule is channeled to the active site of PdxS. This Haemophilus ducreyi (strain 35000HP / ATCC 700724) protein is Pyridoxal 5'-phosphate synthase subunit PdxT.